Consider the following 147-residue polypeptide: MVHLADDEKAAVSALWHKVHVEEFGGEALGRLLVVYPWTSRFFESFGDLSSADAVFSNAKVKAHGKKVLTSFGEGLKHLDDLKGTYAHLSELHCDKLHVDPENFKLLGNVLVIVLARHFGKEFTPQLQAAYQKVTTGVSTALAHKYH.

At Val-2 the chain carries N-acetylvaline. The Globin domain occupies His-3–His-147. Ser-45 bears the Phosphoserine mark. Residue Lys-60 is modified to N6-acetyllysine. A heme b-binding site is contributed by His-64. Lys-83 carries the N6-acetyllysine modification. His-93 serves as a coordination point for heme b. Cys-94 bears the S-nitrosocysteine mark. N6-acetyllysine is present on Lys-145.

It belongs to the globin family. Heterotetramer of two alpha chains and two beta chains. Red blood cells.

In terms of biological role, involved in oxygen transport from the lung to the various peripheral tissues. The sequence is that of Hemoglobin subunit beta (HBB) from Bradypus tridactylus (Pale-throated three-toed sloth).